Here is a 325-residue protein sequence, read N- to C-terminus: MKHFQSKVLTAAILAALSGSAMADNPPPSTDEIAKAALVNSYNNTQDINGFKVGDTIYDINGNGKITRKTATEDDVKADDFGGLGLKEVLAQHDQSLADLTGTVDENSEALVKTAEVVNDISADVKANTAAIGENKAAIAKKADQTALDAVSEKVTANETAIGKKANSADVYTKAEVYTKQESDNRFVKIGDRIGNLNTTANGLETRLADAEKSVADHGTRLASAEKSITEHGTRLNGLDRTVSDLRKETRQGLAEQAALSGLFQPYNVGRFNVTAAVGGYKSESAVAIGTGFRFTENFAAKAGVAVGTSSGSSAAYHVGVNYEW.

An N-terminal signal peptide occupies residues 1 to 23 (MKHFQSKVLTAAILAALSGSAMA). The interval 24–137 (DNPPPSTDEI…NTAAIGENKA (114 aa)) is head domain. Residues 86–135 (LKEVLAQHDQSLADLTGTVDENSEALVKTAEVVNDISADVKANTAAIGEN) adopt a coiled-coil conformation. A coiled stalk domain region spans residues 139 to 231 (IAKKADQTAL…LASAEKSITE (93 aa)). The outer membrane translocation of the passenger domain stretch occupies residues 232–270 (HGTRLNGLDRTVSDLRKETRQGLAEQAALSGLFQPYNVG). Beta stranded transmembrane passes span 270–280 (GRFNVTAAVGG), 284–295 (ESAVAIGTGFRF), 302–308 (KAGVAVG), and 314–325 (SAAYHVGVNYEW). Residues 271–325 (RFNVTAAVGGYKSESAVAIGTGFRFTENFAAKAGVAVGTSSGSSAAYHVGVNYEW) are translocator domain.

This sequence belongs to the autotransporter-2 (AT-2) (TC 1.B.40) family. As to quaternary structure, homotrimer.

The protein resides in the cell surface. The protein localises to the cell outer membrane. In terms of biological role, an antigenic bacterial cell surface protein that adheres to and induces bacterial uptake by human epithelial cells. The chain is Neisseria adhesin A from Neisseria meningitidis serogroup B.